A 256-amino-acid polypeptide reads, in one-letter code: MADYQNILTPCRFAPKPHHGVELPRGNWAEKARPIFVWLLGKIGDASSDHPPGVAGTVSAVLFAFAFLIIGANFLASVDWNPIEFIRLLPWLALEPPRPNWAWVLAPMNEGGWWQITGFFLTMSLLVWWWHVYNRARALGLGTHMAWAFASALFLYLTLGFIRPLLLGNWGEAVPFGLFAHLDWTAAFSLRYGNLYYNPFHMLSIAFLYGSAVLFAMHGATILAVSHLGGDREVEQITDRGTAAERAALFWRWTMG.

3 helical membrane-spanning segments follow: residues 52–78 (PGVAGTVSAVLFAFAFLIIGANFLASV), 110–139 (EGGWWQITGFFLTMSLLVWWWHVYNRARAL), and 142–167 (GTHMAWAFASALFLYLTLGFIRPLLL). H181 and H201 together coordinate (7R,8Z)-bacteriochlorophyll b. Residues 197–225 (YNPFHMLSIAFLYGSAVLFAMHGATILAV) form a helical membrane-spanning segment. Fe cation contacts are provided by H218 and E233. An a ubiquinone-binding site is contributed by W251.

This sequence belongs to the reaction center PufL/M/PsbA/D family. In terms of assembly, reaction center is composed of four bacteriochlorophylls, two bacteriopheophytins, two ubiquinones, one iron, and two highly hydrophobic polypeptide chains (designated L and M).

The protein resides in the cellular chromatophore membrane. Functionally, the reaction center is a membrane-bound complex that mediates the initial photochemical event in the electron transfer process of photosynthesis. The sequence is that of Reaction center protein M chain (pufM) from Pararhodospirillum photometricum (Rhodospirillum photometricum).